A 98-amino-acid polypeptide reads, in one-letter code: NADH-ubiquinone oxidoreductase chain 4L (98 aa).

The next 3 helical transmembrane spans lie at 2–22 (SPIY…TLLF), 26–46 (LMST…MVTS), and 61–81 (ITML…LVMI).

This sequence belongs to the complex I subunit 4L family. Core subunit of respiratory chain NADH dehydrogenase (Complex I) which is composed of 45 different subunits.

Its subcellular location is the mitochondrion inner membrane. It catalyses the reaction a ubiquinone + NADH + 5 H(+)(in) = a ubiquinol + NAD(+) + 4 H(+)(out). Its function is as follows. Core subunit of the mitochondrial membrane respiratory chain NADH dehydrogenase (Complex I) which catalyzes electron transfer from NADH through the respiratory chain, using ubiquinone as an electron acceptor. Part of the enzyme membrane arm which is embedded in the lipid bilayer and involved in proton translocation. The polypeptide is NADH-ubiquinone oxidoreductase chain 4L (MT-ND4L) (Nephelomys albigularis (Tomes's rice rat)).